The chain runs to 126 residues: Small ribosomal subunit protein uS13 (126 aa).

The disordered stretch occupies residues 96–126; that stretch reads LPVHGQRTHTNARTRKGPRRAIAGKKKAGKK.

The protein belongs to the universal ribosomal protein uS13 family. Part of the 30S ribosomal subunit. Forms a loose heterodimer with protein S19. Forms two bridges to the 50S subunit in the 70S ribosome.

Functionally, located at the top of the head of the 30S subunit, it contacts several helices of the 16S rRNA. In the 70S ribosome it contacts the 23S rRNA (bridge B1a) and protein L5 of the 50S subunit (bridge B1b), connecting the 2 subunits; these bridges are implicated in subunit movement. Contacts the tRNAs in the A and P-sites. The protein is Small ribosomal subunit protein uS13 of Frankia alni (strain DSM 45986 / CECT 9034 / ACN14a).